Here is a 316-residue protein sequence, read N- to C-terminus: Cation efflux system protein CzcD (316 aa).

The next 6 membrane-spanning stretches (helical) occupy residues 17 to 37 (LKIA…GGVM), 47 to 67 (AAHM…IAIA), 82 to 102 (FEIL…IYIL), 115 to 135 (IEST…LISM), 152 to 172 (YLEV…AIII), and 174 to 194 (FTGW…WVLP).

The protein belongs to the cation diffusion facilitator (CDF) transporter (TC 2.A.4) family. SLC30A subfamily.

The protein localises to the cell membrane. Necessary for activation of the czc determinant. The sequence is that of Cation efflux system protein CzcD (czcD) from Alcaligenes sp. (strain CT14).